Here is a 337-residue protein sequence, read N- to C-terminus: Eukaryotic translation initiation factor 3 subunit H (337 aa).

The MPN domain occupies 21–153 (VQCDGLAVMK…LKAYRLTPQA (133 aa)).

It belongs to the eIF-3 subunit H family. In terms of assembly, component of the eukaryotic translation initiation factor 3 (eIF-3) complex. The eIF-3 complex interacts with pix. Interacts with mxt.

Its subcellular location is the cytoplasm. Functionally, component of the eukaryotic translation initiation factor 3 (eIF-3) complex, which is involved in protein synthesis of a specialized repertoire of mRNAs and, together with other initiation factors, stimulates binding of mRNA and methionyl-tRNAi to the 40S ribosome. The eIF-3 complex specifically targets and initiates translation of a subset of mRNAs involved in cell proliferation. The sequence is that of Eukaryotic translation initiation factor 3 subunit H from Drosophila virilis (Fruit fly).